We begin with the raw amino-acid sequence, 665 residues long: MIERETSNTFHLASKYEPAGDQPAAIAELVDGVKGGEKAQILLGATGTGKTFTISNVIQEVNKPTLVIAHNKTLAGQLYGEFKEFFPDNAVEYFVSYYDYYQPEAYVPSSDTYIEKDSSINDEIDKLRHSATSSLLERNDVIVVASVSCIFGLGDPREYSQQVVSLRVGMEMDRNELLKSLVDIQFERNDIDFQRGRFRVRGDVVEIFPASRDEHALRVEFFGDEIDRIREVDALTGEIVGETEHVAIFPATHFVTNEEHMEHAISQIQEELEARLKVLRSENKLLEAQRLEQRTNYDIEMMREMGYTSGIENYSRHMDGRQEGEPPYTLLDFFPDDFLLVIDESHVTMPQIRGMYNGDRARKQMLVDYGFRLPSALDNRPLRLEEFEQHVNQIVYVSATPGPYEMEQTETVVQQIIRPTGLLDPEVEIRPIMGQIDDLVGEIHERIEKDQRVFVTTLTKKMAEDLTDYFKELGLKVKYLHSDIKTLERTEIIRDLRLGEFDILIGINLLREGIDVPEVSLIAILDADKEGFLRSERSLVQTMGRAARNAEGKVIMYADKITDSMQRAMDETARRRAIQEAYNEEHGIEPKTIIKEIRDLISISKTADKDETVVQLDKSYKDLSRQEKADLLMKLEREMKDAAKALDFETAATLRDTILELKAAK.

The 384-residue stretch at 31–414 folds into the Helicase ATP-binding domain; it reads DGVKGGEKAQ…EMEQTETVVQ (384 aa). Residue 44–51 participates in ATP binding; that stretch reads GATGTGKT. Residues 97-120 carry the Beta-hairpin motif; sequence YYDYYQPEAYVPSSDTYIEKDSSI. Residues 435-601 enclose the Helicase C-terminal domain; it reads QIDDLVGEIH…TIIKEIRDLI (167 aa). A UVR domain is found at 629 to 664; the sequence is ADLLMKLEREMKDAAKALDFETAATLRDTILELKAA.

Belongs to the UvrB family. In terms of assembly, forms a heterotetramer with UvrA during the search for lesions. Interacts with UvrC in an incision complex.

The protein localises to the cytoplasm. The UvrABC repair system catalyzes the recognition and processing of DNA lesions. A damage recognition complex composed of 2 UvrA and 2 UvrB subunits scans DNA for abnormalities. Upon binding of the UvrA(2)B(2) complex to a putative damaged site, the DNA wraps around one UvrB monomer. DNA wrap is dependent on ATP binding by UvrB and probably causes local melting of the DNA helix, facilitating insertion of UvrB beta-hairpin between the DNA strands. Then UvrB probes one DNA strand for the presence of a lesion. If a lesion is found the UvrA subunits dissociate and the UvrB-DNA preincision complex is formed. This complex is subsequently bound by UvrC and the second UvrB is released. If no lesion is found, the DNA wraps around the other UvrB subunit that will check the other stand for damage. This is UvrABC system protein B from Enterococcus faecalis (strain ATCC 700802 / V583).